We begin with the raw amino-acid sequence, 632 residues long: 1-deoxy-D-xylulose-5-phosphate synthase (632 aa).

Thiamine diphosphate-binding positions include H79 and 120–122 (GHA). Residue D152 participates in Mg(2+) binding. Residues 153–154 (GA), N181, F293, and E377 each bind thiamine diphosphate. N181 provides a ligand contact to Mg(2+).

This sequence belongs to the transketolase family. DXPS subfamily. Homodimer. It depends on Mg(2+) as a cofactor. Thiamine diphosphate is required as a cofactor.

It catalyses the reaction D-glyceraldehyde 3-phosphate + pyruvate + H(+) = 1-deoxy-D-xylulose 5-phosphate + CO2. Its pathway is metabolic intermediate biosynthesis; 1-deoxy-D-xylulose 5-phosphate biosynthesis; 1-deoxy-D-xylulose 5-phosphate from D-glyceraldehyde 3-phosphate and pyruvate: step 1/1. Its function is as follows. Catalyzes the acyloin condensation reaction between C atoms 2 and 3 of pyruvate and glyceraldehyde 3-phosphate to yield 1-deoxy-D-xylulose-5-phosphate (DXP). The chain is 1-deoxy-D-xylulose-5-phosphate synthase from Parabacteroides distasonis (strain ATCC 8503 / DSM 20701 / CIP 104284 / JCM 5825 / NCTC 11152).